The following is a 62-amino-acid chain: UPF0434 protein ABO_2103 (62 aa).

The protein belongs to the UPF0434 family.

The protein is UPF0434 protein ABO_2103 of Alcanivorax borkumensis (strain ATCC 700651 / DSM 11573 / NCIMB 13689 / SK2).